A 479-amino-acid chain; its full sequence is Ribosomal RNA small subunit methyltransferase F (479 aa).

Residues 125 to 131 (AAAPGSK), Glu149, Asp176, and Asp194 each bind S-adenosyl-L-methionine. Cys247 functions as the Nucleophile in the catalytic mechanism.

The protein belongs to the class I-like SAM-binding methyltransferase superfamily. RsmB/NOP family.

The protein localises to the cytoplasm. It catalyses the reaction cytidine(1407) in 16S rRNA + S-adenosyl-L-methionine = 5-methylcytidine(1407) in 16S rRNA + S-adenosyl-L-homocysteine + H(+). Its function is as follows. Specifically methylates the cytosine at position 1407 (m5C1407) of 16S rRNA. In Shigella dysenteriae serotype 1 (strain Sd197), this protein is Ribosomal RNA small subunit methyltransferase F.